Here is a 407-residue protein sequence, read N- to C-terminus: MNNSGADEIGKLFVGGLDWSTTQETLRSYFSQYGEVVDCVIMKDKTTNQSRGFGFVKFKDPNCVGTVLASRPHTLDGRNIDPKPCTPRGMQPERTRPKEGWQKGPRSDNSKSNKIFVGGIPHNCGETELREYFKKFGVVTEVVMIYDAEKQRPRGFGFITFEDEQSVDQAVNMHFHDIMGKKVEVKRAEPRDSKSQAPGQPGASQWGSRVVPNAANGWAGQPPPTWQQGYGPQGMWVPAGQAIGGYGPPPAGRGAPPPPPPFTSYIVSTPPGGFPPPQGFPQGYGAPPQFSFGYGPPPPPPDQFAPPGVPPPPATPGAAPLAFPPPPSQAAPDMSKPPTAQPDFPYGQYAGYGQDLSGFGQGFSDPSQQPPSYGGPSVPGSGGPPAGGSGFGRGQNHNVQGFHPYRR.

Met-1 is modified (N-acetylmethionine). RRM domains lie at 10 to 97 (GKLF…RTRP) and 113 to 190 (NKIF…RAEP). A disordered region spans residues 74-117 (TLDGRNIDPKPCTPRGMQPERTRPKEGWQKGPRSDNSKSNKIFV). Residues 91–111 (QPERTRPKEGWQKGPRSDNSK) are compositionally biased toward basic and acidic residues. Lys-150 is subject to N6-acetyllysine. The span at 185 to 194 (VKRAEPRDSK) shows a compositional bias: basic and acidic residues. The segment at 185-407 (VKRAEPRDSK…NVQGFHPYRR (223 aa)) is disordered. Positions 195 to 207 (SQAPGQPGASQWG) are enriched in polar residues. A compositionally biased stretch (pro residues) spans 247-262 (GPPPAGRGAPPPPPPF). Arg-253 is subject to Omega-N-methylarginine. Positions 280–294 (FPQGYGAPPQFSFGY) are enriched in low complexity. Positions 295–315 (GPPPPPPDQFAPPGVPPPPAT) are enriched in pro residues. Positions 364–379 (SDPSQQPPSYGGPSVP) are enriched in low complexity. Over residues 380-393 (GSGGPPAGGSGFGR) the composition is skewed to gly residues.

As to quaternary structure, interacts with DAZ and DAZL. Post-translationally, acetylation at Lys-150 is predominantly observed in the nuclear fraction, and may regulate nucleocytoplasmic transport. In terms of tissue distribution, mainly expressed in testis. Expressed to a lower level in thymus. Weakly or not expressed in heart, liver, brain, placenta, lung, skeletal muscle, kidney and pancreas.

The protein resides in the cytoplasm. It is found in the nucleus. Functionally, RNA-binding protein, which may be required during spermatogenesis. This chain is DAZ-associated protein 1 (DAZAP1), found in Homo sapiens (Human).